A 264-amino-acid chain; its full sequence is DNA-binding HTH-type transcriptional repressor TrmBL2 (264 aa).

Positions 81–113 (LEKFIEEWQERVKEELEAKKKAKEELIELMKPL) form a coiled coil.

It belongs to the transcriptional regulator TrmB family.

The protein resides in the cytoplasm. It localises to the chromosome. Its function is as follows. An abundant chromosomal protein that seems to be involved in both genome architecture and transcription repression. Incubation with DNA in vitro gives fibrous structures 14.2 +/- 2.1 nm in thickness (naked DNA is 1.83 +/- 0.37 nm); does not significantly compact DNA. Binds to both coding and non-coding regions; binding within gene promoters correlates with decreased transcript levels, while binding within coding regions does not. The sequence is that of DNA-binding HTH-type transcriptional repressor TrmBL2 from Thermococcus kodakarensis (strain ATCC BAA-918 / JCM 12380 / KOD1) (Pyrococcus kodakaraensis (strain KOD1)).